The sequence spans 467 residues: Hydroxyacid-oxoacid transhydrogenase, mitochondrial (467 aa).

K445 carries the N6-acetyllysine modification. The residue at position 452 (S452) is a Phosphoserine.

It belongs to the iron-containing alcohol dehydrogenase family. Hydroxyacid-oxoacid transhydrogenase subfamily. Expressed in kidney and liver.

It localises to the mitochondrion. The catalysed reaction is (S)-3-hydroxybutanoate + 2-oxoglutarate = (R)-2-hydroxyglutarate + acetoacetate. It catalyses the reaction 4-hydroxybutanoate + 2-oxoglutarate = (R)-2-hydroxyglutarate + succinate semialdehyde. Its function is as follows. Catalyzes the cofactor-independent reversible oxidation of gamma-hydroxybutyrate (GHB) to succinic semialdehyde (SSA) coupled to reduction of 2-ketoglutarate (2-KG) to D-2-hydroxyglutarate (D-2-HG). L-3-hydroxybutyrate (L-3-OHB) is also a substrate for HOT when using 2-KG as hydrogen acceptor, resulting in the formation of D-2-HG. This is Hydroxyacid-oxoacid transhydrogenase, mitochondrial (Adhfe1) from Rattus norvegicus (Rat).